The chain runs to 156 residues: Small ribosomal subunit protein uS7 (156 aa).

This sequence belongs to the universal ribosomal protein uS7 family. In terms of assembly, part of the 30S ribosomal subunit. Contacts proteins S9 and S11.

Functionally, one of the primary rRNA binding proteins, it binds directly to 16S rRNA where it nucleates assembly of the head domain of the 30S subunit. Is located at the subunit interface close to the decoding center, probably blocks exit of the E-site tRNA. The sequence is that of Small ribosomal subunit protein uS7 from Dechloromonas aromatica (strain RCB).